Consider the following 647-residue polypeptide: UvrABC system protein C (647 aa).

The GIY-YIG domain maps to 16-95; that stretch reads VEPGVYRFRD…IKEFDPRFNV (80 aa). The UVR domain occupies 208 to 243; sequence DRFARELEQQMNAAAAELDFERAARLRDDLGALKRA.

This sequence belongs to the UvrC family. Interacts with UvrB in an incision complex.

It is found in the cytoplasm. The UvrABC repair system catalyzes the recognition and processing of DNA lesions. UvrC both incises the 5' and 3' sides of the lesion. The N-terminal half is responsible for the 3' incision and the C-terminal half is responsible for the 5' incision. The chain is UvrABC system protein C from Mycolicibacterium paratuberculosis (strain ATCC BAA-968 / K-10) (Mycobacterium paratuberculosis).